The chain runs to 623 residues: Probable lysophospholipase 5 (623 aa).

Residues 1 to 19 (MKLSSFGLFLALQLLPALG) form the signal peptide. Residues 67 to 607 (ACPSGSLLRP…NQYCWNGTIA (541 aa)) form the PLA2c domain. N118, N153, N187, N232, N256, N264, N293, N331, N360, N367, N400, N403, N474, N508, N513, N537, N564, N586, and N603 each carry an N-linked (GlcNAc...) asparagine glycan.

Belongs to the lysophospholipase family.

The protein localises to the secreted. It catalyses the reaction a 1-acyl-sn-glycero-3-phosphocholine + H2O = sn-glycerol 3-phosphocholine + a fatty acid + H(+). Its function is as follows. Catalyzes the release of fatty acids from lysophospholipids. This Schizosaccharomyces pombe (strain 972 / ATCC 24843) (Fission yeast) protein is Probable lysophospholipase 5 (plb5).